The following is a 2084-amino-acid chain: MAP kinase-activating death domain protein (2084 aa).

In terms of domain architecture, uDENN spans 25 to 352; it reads TPPMPKGLQG…VPVPGSTRVE (328 aa). The tract at residues 117–253 is disordered; the sequence is PSSAAGSAGA…SPRASRKRTK (137 aa). The span at 118–131 shows a compositional bias: low complexity; sequence SSAAGSAGAGNDRP. The span at 132-152 shows a compositional bias: gly residues; sequence GNGGPGGHGGGAGGGAGGGGR. Basic and acidic residues predominate over residues 160 to 173; that stretch reads FRRESWRKSMERSS. A compositionally biased stretch (low complexity) spans 174-183; sequence DSAFSSDYRS. Over residues 189–204 the composition is skewed to basic and acidic residues; it reads DSDRELTSRRDSDQQR. Basic residues predominate over residues 205–215; sequence LHSHHSHHQPH. Residues 234–245 are compositionally biased toward polar residues; the sequence is DSESGGSHSPSP. Residues 373–514 form the cDENN domain; sequence RFSLVDFPLH…EGTILKNHLK (142 aa). A dDENN domain is found at 516-678; the sequence is ALTSMTATNT…EWSLTPTNVA (163 aa). 7 disordered regions span residues 557–588, 730–749, 811–863, 891–963, 1058–1092, 1115–1188, and 1305–1382; these read TPPH…NSPA, QPTD…SSSY, VASK…TVGS, QESD…SQSS, HSAG…GNNF, FGKK…AENQ, and SSSL…GQST. Positions 558-588 are enriched in polar residues; sequence PPHSAQASQRNSMSAQGTISSRQPSPMNSPA. Low complexity predominate over residues 824–839; the sequence is SPVSSSSSRSDLSSPS. Residues 913–925 show a composition bias toward basic and acidic residues; it reads HPSDSESRPEKKI. The span at 946–963 shows a compositional bias: low complexity; sequence GSSGSSSSSPGRQSSQSS. Over residues 1121–1131 the composition is skewed to low complexity; sequence QKQVPVQQKQP. A compositionally biased stretch (basic and acidic residues) spans 1168–1183; the sequence is TQEELTRQQNQERSHS. Over residues 1305–1315 the composition is skewed to low complexity; the sequence is SSSLLSSHAAS. 2 stretches are compositionally biased toward polar residues: residues 1324 to 1353 and 1370 to 1382; these read RSPS…STQL and RLSS…GQST. The Death domain maps to 1490-1565; that stretch reads GMDQGPIEMM…GLVYSQEVHN (76 aa). Positions 1794-1842 are enriched in low complexity; sequence DIHAQQKQKHQQQQQHQQPQQQQQPHQTTTQQNQPTAVASAVPTTTAPA. 2 disordered regions span residues 1794–1865 and 1896–2084; these read DIHA…RHTV and VPVP…HRKH. The span at 1845-1858 shows a compositional bias: polar residues; that stretch reads VNPNRMTAKSQAGS. The span at 1896–1907 shows a compositional bias: pro residues; the sequence is VPVPPTPAPPTS. Residues 1921 to 1932 show a composition bias toward polar residues; the sequence is SQPSTESLASIS. Pro residues-rich tracts occupy residues 1933-1953 and 1983-1993; these read SPPP…PAIP and QYTPQPPPPFV. Low complexity-rich tracts occupy residues 2001–2029 and 2059–2077; these read LARA…HSQS and ISGS…ASAS.

Belongs to the MADD family.

The protein resides in the cell membrane. It is found in the cytoplasm. Guanyl-nucleotide exchange factor that regulates small GTPases. Converts GDP-bound inactive form of Rab3 to the GTP-bound active forms. This is MAP kinase-activating death domain protein from Drosophila melanogaster (Fruit fly).